We begin with the raw amino-acid sequence, 349 residues long: Anthranilate phosphoribosyltransferase (349 aa).

5-phospho-alpha-D-ribose 1-diphosphate contacts are provided by residues Gly-82, Gly-85–Asp-86, Asn-92–Ser-95, Lys-110–Gly-118, and Ser-122. Anthranilate is bound at residue Gly-82. Position 94 (Ser-94) interacts with Mg(2+). Asn-113 contributes to the anthranilate binding site. Residue Arg-168 coordinates anthranilate. The Mg(2+) site is built by Asp-227 and Glu-228.

Belongs to the anthranilate phosphoribosyltransferase family. Homodimer. Mg(2+) is required as a cofactor.

The enzyme catalyses N-(5-phospho-beta-D-ribosyl)anthranilate + diphosphate = 5-phospho-alpha-D-ribose 1-diphosphate + anthranilate. Its pathway is amino-acid biosynthesis; L-tryptophan biosynthesis; L-tryptophan from chorismate: step 2/5. Functionally, catalyzes the transfer of the phosphoribosyl group of 5-phosphorylribose-1-pyrophosphate (PRPP) to anthranilate to yield N-(5'-phosphoribosyl)-anthranilate (PRA). This is Anthranilate phosphoribosyltransferase from Pseudomonas aeruginosa (strain LESB58).